A 274-amino-acid polypeptide reads, in one-letter code: MLTKRIIPCLDCDLQVPEGRVVKGVEFKEIKYAGNPVDLATRYYEMGADEIVILDITASYERRATMADVIDRLTENVFIPICVGGGIRKVEDYTKMLKAGADKCSTNTAAIKNPELLTEASKVVGSQAVVVGIDAKRRYVDNPSDAPDKNVVETDEGYCWFDCSIYGGREFTGMDAIEWAVKCQELGAGEILLTSMDGDGTKEGYDIALNKAINDAIDIPVIASGGGGNPAHILDVFQKTDVSAALAASIFHFNQYSINDVKQYLKENNVPVRL.

Residues aspartate 11 and aspartate 134 contribute to the active site.

The protein belongs to the HisA/HisF family. As to quaternary structure, heterodimer of HisH and HisF.

The protein resides in the cytoplasm. The enzyme catalyses 5-[(5-phospho-1-deoxy-D-ribulos-1-ylimino)methylamino]-1-(5-phospho-beta-D-ribosyl)imidazole-4-carboxamide + L-glutamine = D-erythro-1-(imidazol-4-yl)glycerol 3-phosphate + 5-amino-1-(5-phospho-beta-D-ribosyl)imidazole-4-carboxamide + L-glutamate + H(+). It functions in the pathway amino-acid biosynthesis; L-histidine biosynthesis; L-histidine from 5-phospho-alpha-D-ribose 1-diphosphate: step 5/9. IGPS catalyzes the conversion of PRFAR and glutamine to IGP, AICAR and glutamate. The HisF subunit catalyzes the cyclization activity that produces IGP and AICAR from PRFAR using the ammonia provided by the HisH subunit. This is Imidazole glycerol phosphate synthase subunit HisF from Methanobrevibacter smithii (strain ATCC 35061 / DSM 861 / OCM 144 / PS).